We begin with the raw amino-acid sequence, 785 residues long: Penicillin-binding protein 1A (785 aa).

Topologically, residues 1 to 6 are cytoplasmic; that stretch reads MYKSLF. A helical; Signal-anchor for type II membrane protein transmembrane segment spans residues 7 to 27; sequence FFLKIFAILILLGCSVTAYII. Residues 28-785 are Periplasmic-facing; the sequence is YHYSHDLPDY…GISDQSQEIY (758 aa). Residues 49–220 are transglycosylase; it reads TRIYSRDGKL…SELNPDKNYS (172 aa). E87 acts as the Proton donor; for transglycosylase activity in catalysis. Residues 398–711 are transpeptidase; sequence DVIVVEPIKD…SNVVLPIFID (314 aa). The active-site Acyl-ester intermediate; for transpeptidase activity is the S457.

In the N-terminal section; belongs to the glycosyltransferase 51 family. It in the C-terminal section; belongs to the transpeptidase family.

Its subcellular location is the cell inner membrane. It catalyses the reaction [GlcNAc-(1-&gt;4)-Mur2Ac(oyl-L-Ala-gamma-D-Glu-L-Lys-D-Ala-D-Ala)](n)-di-trans,octa-cis-undecaprenyl diphosphate + beta-D-GlcNAc-(1-&gt;4)-Mur2Ac(oyl-L-Ala-gamma-D-Glu-L-Lys-D-Ala-D-Ala)-di-trans,octa-cis-undecaprenyl diphosphate = [GlcNAc-(1-&gt;4)-Mur2Ac(oyl-L-Ala-gamma-D-Glu-L-Lys-D-Ala-D-Ala)](n+1)-di-trans,octa-cis-undecaprenyl diphosphate + di-trans,octa-cis-undecaprenyl diphosphate + H(+). It carries out the reaction Preferential cleavage: (Ac)2-L-Lys-D-Ala-|-D-Ala. Also transpeptidation of peptidyl-alanyl moieties that are N-acyl substituents of D-alanine.. Its pathway is cell wall biogenesis; peptidoglycan biosynthesis. In terms of biological role, cell wall formation. Synthesis of cross-linked peptidoglycan from the lipid intermediates. The enzyme has a penicillin-insensitive transglycosylase N-terminal domain (formation of linear glycan strands) and a penicillin-sensitive transpeptidase C-terminal domain (cross-linking of the peptide subunits). This Rickettsia typhi (strain ATCC VR-144 / Wilmington) protein is Penicillin-binding protein 1A (mrcA).